The chain runs to 369 residues: MSKRKIKEEMLQVIAPEIYGPPKKEEQDYKPRKLKRVKKKKKDDDDDELDDEVELLHATAPRRRVQWKGRRVRRVLRPGTTVVFTPGERSTRTYKRVYDEVYGDEDLLEQANERLGEFAYGKRHKDMLALPLDEGNPTPSLKPVTLQQVLPTLAPSEEKRGLKRESGDLAPTVQLMVPKRQRLEDVLEKMTVEPGLEPEVRVRPIKQVAPGLGVQTVDVQIPTTSSTSIATATEGMETQTSPVASAVADAAVQAAAAAASKTSTEVQTDPWMFRVSAPRRPRRSRKYGTASALLPEYALHPSIAPTPGYRGYTYRPRRRATTRRRTTTGTRRRRRRRQPVLAPISVRRVAREGGRTLVLPTARYHPSIV.

Positions A15–D50 are disordered. Positions P22–P31 are enriched in basic and acidic residues. The span at R32–K41 shows a compositional bias: basic residues. T85 carries the phosphothreonine; by host modification. S166 carries the post-translational modification Phosphoserine; by host. Positions P307–A342 are disordered. Basic residues predominate over residues R315–Q338.

This sequence belongs to the adenoviridae core-capsid bridging protein family. Monomer. Homodimer. Exists in equilibrium between monomers and dimers in solution. Interacts with the histone-like nucleoprotein; this interactions bridge the virus core to the capsid. Interacts with core protein X; this interactions bridge the virus core to the capsid. Interacts with the endosome lysis protein VI; this interactions bridge the virus core to the capsid. Interacts with the peripentonal hexons. Interacts with host NPM1; this interaction might play a role in virus assembly.

Its subcellular location is the virion. The protein localises to the host nucleus. It is found in the host nucleolus. In terms of biological role, associates loosely with the viral DNA to form an outer shell around the nucleoprotein-DNA complex and links it with the capsid by binding the endosome lysis protein. Dissociates from the viral genome during entry. Might be involved in nuclear capsid assembly of the viral particles through its association with NPM1/nucleophosmin. In Homo sapiens (Human), this protein is Core-capsid bridging protein.